A 704-amino-acid polypeptide reads, in one-letter code: Polyribonucleotide nucleotidyltransferase (704 aa).

Residues Asp487 and Asp493 each contribute to the Mg(2+) site. One can recognise a KH domain in the interval 554 to 613; the sequence is PRLLTIKIHPDKIREVIGKGGSTIQAITKETGTQIDIQDDGTIIIASVNAIAAQAAKSRI. The S1 motif domain maps to 623–691; that stretch reads GRIYEGKVAK…KQGRIRLSIK (69 aa).

The protein belongs to the polyribonucleotide nucleotidyltransferase family. Component of the RNA degradosome, which is a multiprotein complex involved in RNA processing and mRNA degradation. Mg(2+) is required as a cofactor.

It localises to the cytoplasm. The enzyme catalyses RNA(n+1) + phosphate = RNA(n) + a ribonucleoside 5'-diphosphate. Involved in mRNA degradation. Catalyzes the phosphorolysis of single-stranded polyribonucleotides processively in the 3'- to 5'-direction. The polypeptide is Polyribonucleotide nucleotidyltransferase (Xanthomonas oryzae pv. oryzae (strain MAFF 311018)).